Reading from the N-terminus, the 329-residue chain is UDP-2,3-diacylglucosamine pyrophosphatase LpxG (329 aa).

The helical transmembrane segment at 2-24 threads the bilayer; the sequence is FVFVGSTVSLTAIVAAPVLTWIW. 6 residues coordinate a divalent metal cation: aspartate 59, histidine 61, aspartate 91, asparagine 123, histidine 257, and histidine 259.

This sequence belongs to the metallophosphoesterase superfamily. The cofactor is Mn(2+).

The protein localises to the cell inner membrane. The enzyme catalyses UDP-2,3-diacyl-alpha-D-glucosamine + H2O = 2,3-diacyl-alpha-D-glucosaminyl 1-phosphate + UMP + 2 H(+). Its pathway is glycolipid biosynthesis; lipid IV(A) biosynthesis. In terms of biological role, hydrolyzes the pyrophosphate bond of UDP-2,3-diacylglucosamine to form 2,3-diacylglucosamine 1-phosphate (lipid X) and UMP by catalyzing the attack of water at the alpha-P atom. Involved in the biosynthesis of lipid A, a phosphorylated glycolipid that anchors the lipooligosaccharide (LOS) to the outer membrane of the cell. This Chlamydia muridarum (strain MoPn / Nigg) protein is UDP-2,3-diacylglucosamine pyrophosphatase LpxG.